Here is a 96-residue protein sequence, read N- to C-terminus: Small ribosomal subunit protein uS17 (96 aa).

It belongs to the universal ribosomal protein uS17 family. As to quaternary structure, part of the 30S ribosomal subunit.

In terms of biological role, one of the primary rRNA binding proteins, it binds specifically to the 5'-end of 16S ribosomal RNA. The protein is Small ribosomal subunit protein uS17 of Deinococcus radiodurans (strain ATCC 13939 / DSM 20539 / JCM 16871 / CCUG 27074 / LMG 4051 / NBRC 15346 / NCIMB 9279 / VKM B-1422 / R1).